The sequence spans 256 residues: ATP synthase subunit a (256 aa).

Positions 1 to 8 are cleaved as a propeptide — removed in mature form; it reads MYQFNFIL. The next 7 helical transmembrane spans lie at 34–54, 92–112, 121–141, 148–168, 186–206, 209–229, and 230–250; these read ITNI…YHLL, YFPF…IGMV, HFIL…FLGL, FFSL…LVLI, ANIL…YNIM, GILF…FSGL, and ELAI…SYIK.

Belongs to the ATPase A chain family. As to quaternary structure, F-type ATPases have 2 components, CF(1) - the catalytic core - and CF(0) - the membrane proton channel. CF(1) has five subunits: alpha(3), beta(3), gamma(1), delta(1), epsilon(1). CF(0) has three main subunits: a, b and c.

The protein resides in the mitochondrion inner membrane. Its function is as follows. Mitochondrial membrane ATP synthase (F(1)F(0) ATP synthase or Complex V) produces ATP from ADP in the presence of a proton gradient across the membrane which is generated by electron transport complexes of the respiratory chain. F-type ATPases consist of two structural domains, F(1) - containing the extramembraneous catalytic core and F(0) - containing the membrane proton channel, linked together by a central stalk and a peripheral stalk. During catalysis, ATP synthesis in the catalytic domain of F(1) is coupled via a rotary mechanism of the central stalk subunits to proton translocation. Key component of the proton channel; it may play a direct role in the translocation of protons across the membrane. The sequence is that of ATP synthase subunit a (atp6) from Emericella nidulans (Aspergillus nidulans).